The primary structure comprises 261 residues: Eukaryotic translation initiation factor 3 subunit J-A (261 aa).

A compositionally biased stretch (low complexity) spans 1-11 (MAAAAAAAAAA). A disordered region spans residues 1–113 (MAAAAAAAAA…EPEESKVLTP (113 aa)). A sufficient for interaction with EIF3B region spans residues 4–72 (AAAAAAAAGD…KEEAEVKPEV (69 aa)). 3 positions are modified to phosphoserine: serine 14, serine 16, and serine 23. Residues 43–64 (EGEDEDEDVKDNWDDDDDENKE) are compositionally biased toward acidic residues. A compositionally biased stretch (basic and acidic residues) spans 65–109 (EAEVKPEVKISEKKKIAEKIKEKERQQKKRQEEIKKRLEEPEESK). The stretch at 73–138 (KISEKKKIAE…ESDLELAKET (66 aa)) forms a coiled coil. Lysine 109 is covalently cross-linked (Glycyl lysine isopeptide (Lys-Gly) (interchain with G-Cter in SUMO2)). Residue threonine 112 is modified to Phosphothreonine. Serine 130 is modified (phosphoserine). The segment at 246 to 261 (YGGYEGGYVQDYEDFM) is promotes stable association with the 40S ribosome. Tyrosine 257 is modified (phosphotyrosine).

It belongs to the eIF-3 subunit J family. Component of the eukaryotic translation initiation factor 3 (eIF-3) complex, which is composed of 13 subunits: EIF3A, EIF3B, EIF3C, EIF3D, EIF3E, EIF3F, EIF3G, EIF3H, EIF3I, EIF3J, EIF3K, EIF3L and EIF3M. The eIF-3 complex appears to include 3 stable modules: module A is composed of EIF3A, EIF3B, EIF3G and EIF3I; module B is composed of EIF3F, EIF3H, and EIF3M; and module C is composed of EIF3C, EIF3D, EIF3E, EIF3K and EIF3L. EIF3C of module C binds EIF3B of module A and EIF3H of module B, thereby linking the three modules. EIF3J is a labile subunit that binds to the eIF-3 complex via EIF3B. The eIF-3 complex interacts with RPS6KB1 under conditions of nutrient depletion. Mitogenic stimulation leads to binding and activation of a complex composed of MTOR and RPTOR, leading to phosphorylation and release of RPS6KB1 and binding of EIF4B to eIF-3. In terms of processing, phosphorylated. Phosphorylation is enhanced upon serum stimulation.

Its subcellular location is the cytoplasm. Its function is as follows. Component of the eukaryotic translation initiation factor 3 (eIF-3) complex, which is required for several steps in the initiation of protein synthesis. The eIF-3 complex associates with the 40S ribosome and facilitates the recruitment of eIF-1, eIF-1A, eIF-2:GTP:methionyl-tRNAi and eIF-5 to form the 43S pre-initiation complex (43S PIC). The eIF-3 complex stimulates mRNA recruitment to the 43S PIC and scanning of the mRNA for AUG recognition. The eIF-3 complex is also required for disassembly and recycling of post-termination ribosomal complexes and subsequently prevents premature joining of the 40S and 60S ribosomal subunits prior to initiation. The eIF-3 complex specifically targets and initiates translation of a subset of mRNAs involved in cell proliferation, including cell cycling, differentiation and apoptosis, and uses different modes of RNA stem-loop binding to exert either translational activation or repression. This subunit binds directly within the mRNA entry channel of the 40S ribosome to the aminoacyl (A) site. It may regulate the interaction between the 43S PIC and mRNA. The polypeptide is Eukaryotic translation initiation factor 3 subunit J-A (Eif3j1) (Mus musculus (Mouse)).